We begin with the raw amino-acid sequence, 1288 residues long: CLIP-associating protein 2 (1288 aa).

The interval 1 to 62 (MALSLSQDRS…AAKSGASKEG (62 aa)) is disordered. 2 stretches are compositionally biased toward low complexity: residues 19-32 (GSRP…FKVP) and 40-62 (ESAS…SKEG). The interval 62–312 (GAGAVDEEDF…RTLQSCLKSS (251 aa)) is TOG 1. HEAT repeat units lie at residues 174 to 209 (HGAE…IRHT), 210 to 246 (HVPR…EWQT), and 251 to 288 (RHAA…HFPG). 2 disordered regions span residues 314-571 (SVAS…SSRL) and 614-634 (ANSD…NGSI). 2 stretches are compositionally biased toward low complexity: residues 317-337 (SLPQ…RPLS) and 347-358 (PAGSKSSGSPAS). Composition is skewed to polar residues over residues 406–421 (KQTL…SQVD) and 468–478 (TALSTLSTGAQ). The SXIP motif 1 motif lies at 490-493 (SRIP). Over residues 496 to 518 (QGCSRDSSPTRLSVAPSNISHIY) the composition is skewed to polar residues. The short motif at 527 to 530 (SRIP) is the SXIP motif 2 element. Residues 616–630 (SDASSACSERSYSSR) show a composition bias toward low complexity. Residues 638–889 (MRQTEDVAEV…TKLLQNHLRN (252 aa)) form a TOG 2 region. HEAT repeat units lie at residues 718-755 (RVFS…KMGA) and 780-817 (LQFT…QMEP). The span at 891–900 (GNTAQASIGS) shows a compositional bias: polar residues. Disordered stretches follow at residues 891 to 936 (GNTA…FDYD) and 960 to 1047 (SVRS…DSGV). Over residues 912 to 931 (SWSSPLTSPTNTSQNTPSPS) the composition is skewed to low complexity. Over residues 963 to 977 (SQEDMTEPPRKREGD) the composition is skewed to basic and acidic residues. Residues 1019–1030 (SDSSFGSSSFNK) are compositionally biased toward low complexity. Positions 1036-1046 (DQEESLTDDSG) are enriched in acidic residues. HEAT repeat units lie at residues 1047–1086 (VDQS…ETQL), 1091–1128 (EHFK…RQPW), 1167–1204 (ISPD…RLPK), and 1209–1246 (QMLP…VIGE).

This sequence belongs to the CLASP family. As to quaternary structure, interacts with microtubules.

Its subcellular location is the cytoplasm. The protein localises to the cytoskeleton. It is found in the microtubule organizing center. The protein resides in the centrosome. It localises to the chromosome. Its subcellular location is the centromere. The protein localises to the kinetochore. It is found in the spindle. The protein resides in the golgi apparatus. It localises to the trans-Golgi network. Its subcellular location is the cell membrane. The protein localises to the cell projection. It is found in the ruffle membrane. Its function is as follows. Microtubule plus-end tracking protein that promotes the stabilization of dynamic microtubules. Involved in the nucleation of noncentrosomal microtubules originating from the trans-Golgi network (TGN). Required for the polarization of the cytoplasmic microtubule arrays in migrating cells towards the leading edge of the cell. May act at the cell cortex to enhance the frequency of rescue of depolymerizing microtubules. This cortical microtubule stabilizing activity is regulated at least in part by phosphatidylinositol 3-kinase signaling. Also performs a similar stabilizing function at the kinetochore which is essential for the bipolar alignment of chromosomes on the mitotic spindle. This chain is CLIP-associating protein 2 (clasp2), found in Danio rerio (Zebrafish).